A 496-amino-acid chain; its full sequence is Pup--protein ligase (496 aa).

E30 is a binding site for Mg(2+). R73 serves as a coordination point for ATP. Y75 lines the Mg(2+) pocket. The Proton acceptor role is filled by D77. E83 provides a ligand contact to Mg(2+). ATP contacts are provided by T86 and W450.

This sequence belongs to the Pup ligase/Pup deamidase family. Pup-conjugating enzyme subfamily.

It carries out the reaction ATP + [prokaryotic ubiquitin-like protein]-L-glutamate + [protein]-L-lysine = ADP + phosphate + N(6)-([prokaryotic ubiquitin-like protein]-gamma-L-glutamyl)-[protein]-L-lysine.. The protein operates within protein degradation; proteasomal Pup-dependent pathway. It functions in the pathway protein modification; protein pupylation. Its function is as follows. Catalyzes the covalent attachment of the prokaryotic ubiquitin-like protein modifier Pup to the proteasomal substrate proteins, thereby targeting them for proteasomal degradation. This tagging system is termed pupylation. The ligation reaction involves the side-chain carboxylate of the C-terminal glutamate of Pup and the side-chain amino group of a substrate lysine. This chain is Pup--protein ligase, found in Bifidobacterium animalis subsp. lactis (strain AD011).